The primary structure comprises 271 residues: Bis(5'-nucleosyl)-tetraphosphatase, symmetrical (271 aa).

Belongs to the Ap4A hydrolase family.

It carries out the reaction P(1),P(4)-bis(5'-adenosyl) tetraphosphate + H2O = 2 ADP + 2 H(+). Hydrolyzes diadenosine 5',5'''-P1,P4-tetraphosphate to yield ADP. This Aliivibrio fischeri (strain ATCC 700601 / ES114) (Vibrio fischeri) protein is Bis(5'-nucleosyl)-tetraphosphatase, symmetrical.